The sequence spans 167 residues: Ubiquitin-fold modifier-conjugating enzyme 1 (167 aa).

The active-site Glycyl thioester intermediate is Cys-116.

This sequence belongs to the ubiquitin-conjugating enzyme family. UFC1 subfamily. As to quaternary structure, interacts with UBA5 (via C-terminus). Interacts with UFL1. Interacts with UFM1.

Its function is as follows. E2-like enzyme which specifically catalyzes the second step in ufmylation. Accepts the ubiquitin-like modifier UFM1 from the E1 enzyme UBA5 and forms an intermediate with UFM1 via a thioester linkage. Ufmylation is involved in various processes, such as ribosome recycling, response to DNA damage, interferon response or reticulophagy (also called ER-phagy). The protein is Ubiquitin-fold modifier-conjugating enzyme 1 of Salmo salar (Atlantic salmon).